Here is a 143-residue protein sequence, read N- to C-terminus: Endoribonuclease YbeY (143 aa).

Positions 109, 113, and 119 each coordinate Zn(2+).

Belongs to the endoribonuclease YbeY family. Zn(2+) is required as a cofactor.

It localises to the cytoplasm. Functionally, single strand-specific metallo-endoribonuclease involved in late-stage 70S ribosome quality control and in maturation of the 3' terminus of the 16S rRNA. The sequence is that of Endoribonuclease YbeY from Christiangramia forsetii (strain DSM 17595 / CGMCC 1.15422 / KT0803) (Gramella forsetii).